Consider the following 430-residue polypeptide: Dihydrolipoyllysine-residue acetyltransferase component of pyruvate dehydrogenase complex (430 aa).

The Lipoyl-binding domain maps to 2-77 (AFEFRLPDIG…VVGDVIVKID (76 aa)). The residue at position 43 (Lys-43) is an N6-lipoyllysine. The disordered stretch occupies residues 80–122 (DAEDMQFKGHDDDSSSKEEPAKEEAPAEQAPVATQTEEVDENR). Residues 84–104 (MQFKGHDDDSSSKEEPAKEEA) are compositionally biased toward basic and acidic residues. The 38-residue stretch at 125–162 (KAMPSVRKYAREKGVNIKAVSGSGKNGRITKEDVDAYL) folds into the Peripheral subunit-binding (PSBD) domain. The segment at 164–200 (GGAPTASNESADSATNEEVAETPAAPAAVSLEGDFPE) is disordered. The span at 177–192 (ATNEEVAETPAAPAAV) shows a compositional bias: low complexity. His-401 is a catalytic residue.

The protein belongs to the 2-oxoacid dehydrogenase family. In terms of assembly, forms a 24-polypeptide structural core with octahedral symmetry. (R)-lipoate is required as a cofactor.

It catalyses the reaction N(6)-[(R)-dihydrolipoyl]-L-lysyl-[protein] + acetyl-CoA = N(6)-[(R)-S(8)-acetyldihydrolipoyl]-L-lysyl-[protein] + CoA. Its function is as follows. The pyruvate dehydrogenase complex catalyzes the overall conversion of pyruvate to acetyl-CoA and CO(2). It contains multiple copies of three enzymatic components: pyruvate dehydrogenase (E1), dihydrolipoamide acetyltransferase (E2) and lipoamide dehydrogenase (E3). The chain is Dihydrolipoyllysine-residue acetyltransferase component of pyruvate dehydrogenase complex (pdhC) from Staphylococcus aureus.